Here is a 99-residue protein sequence, read N- to C-terminus: HssA/B-like protein 42 (99 aa).

The disordered stretch occupies residues 1-29 (MTLFSSISSMSTSMSGSKSSISSFGSGTS).

This sequence belongs to the hssA/B family.

This Dictyostelium discoideum (Social amoeba) protein is HssA/B-like protein 42 (hssl42).